Consider the following 287-residue polypeptide: Nucleotide-binding protein mma_3120 (287 aa).

Gly-8 to Ser-15 is an ATP binding site. GTP is bound at residue Asp-57 to Ser-60.

It belongs to the RapZ-like family.

Its function is as follows. Displays ATPase and GTPase activities. This Janthinobacterium sp. (strain Marseille) (Minibacterium massiliensis) protein is Nucleotide-binding protein mma_3120.